We begin with the raw amino-acid sequence, 602 residues long: Sodium- and chloride-dependent GABA transporter 2 (602 aa).

Residues 1 to 40 (MENRASGTTSNGETKPVCPAMEKVEEDGTLEREHWNNKME) lie on the Cytoplasmic side of the membrane. Transmembrane regions (helical) follow at residues 41-61 (FVLSVAGEIIGLGNVWRFPYL), 68-88 (GAFFIPYLIFLFTCGIPVFFL), and 121-141 (IVSLLNVYYIVVLAWALFYLF). At 142-206 (SSFTTDLPWG…GIQHLGSLRW (65 aa)) the chain is on the extracellular side. Cys153 and Cys162 are oxidised to a cystine. N-linked (GlcNAc...) asparagine glycosylation is found at Asn169, Asn173, and Asn178. A run of 2 helical transmembrane segments spans residues 207–227 (ELVLCLLLAWIICYFCIWKGV) and 233–253 (VVYFTATFPYLMLVVLLIRGV). A glycan (N-linked (GlcNAc...) asparagine) is linked at Asn269. The next 7 helical transmembrane spans lie at 282–302 (AGTQIFFSFAICLGCLTALGS), 319–339 (ILNSSTSFMAGFAIFSILGFM), 366–386 (VVMLPFSPLWACCFFFMVVLL), 418–438 (VLILIVSVISFFIGLIMLTEG), 453–473 (GMCLLFVAIFESLCVAWVYGA), 490–510 (PLIKYCWLFFTPAVCLATFLF), and 528–548 (WWGDALGWLLALSSMICIPAW). Residues 549 to 602 (SIYKLRTLKGPLRERLRQLVCPAEDLPQKNQPEPTAPATPMTSLLRLTELESNC) lie on the Cytoplasmic side of the membrane. Thr587 bears the Phosphothreonine mark. Residue Ser591 is modified to Phosphoserine.

It belongs to the sodium:neurotransmitter symporter (SNF) (TC 2.A.22) family. SLC6A13 subfamily. Expressed at high levels in liver, followed by kidney and leptomeninges, and very low levels in the cerebellum (at protein level). In the brain, detected in some blood vessels (at protein level). In the kidney, expressed in the cortex, including parts of the proximal tubules, but not in the medulla (at protein level). In the liver, highest expression in periportal hepatocytes, with highest density at the vascular side (at protein level). Also detected at low levels in other organs, including skeletal muscle.

The protein resides in the cell membrane. It is found in the basolateral cell membrane. The catalysed reaction is 4-aminobutanoate(out) + chloride(out) + 2 Na(+)(out) = 4-aminobutanoate(in) + chloride(in) + 2 Na(+)(in). It catalyses the reaction taurine(out) + chloride(out) + 2 Na(+)(out) = taurine(in) + chloride(in) + 2 Na(+)(in). The enzyme catalyses beta-alanine(out) + chloride(out) + 2 Na(+)(out) = beta-alanine(in) + chloride(in) + 2 Na(+)(in). It carries out the reaction hypotaurine(out) + chloride(out) + 2 Na(+)(out) = hypotaurine(in) + chloride(in) + 2 Na(+)(in). Gamma-aminobutyric acid (GABA) transport is inhibited by beta-alanine, taurine, hypotaurine, beta-guanidinopropionic acid, 2,3-diaminopropionic acid, guvacine and nipecotic acid. Beta-alanine transport is inhibited by GABA. Taurine transport is inhibited by GABA, beta-alanine, SNAP-5114, nigericin, nipecotic acid and ouabain. Functionally, mediates sodium- and chloride-dependent transport of gamma-aminobutyric acid (GABA). Can also mediate transport of beta-alanine, taurine and hypotaurine and is the major taurine transporter in hepatocytes. This chain is Sodium- and chloride-dependent GABA transporter 2 (Slc6a13), found in Mus musculus (Mouse).